Consider the following 271-residue polypeptide: Uridine-cytidine kinase 1-B (271 aa).

24–32 (GGTASGKST) is a binding site for ATP. Residues Asp-81, Tyr-109, His-114, Arg-163, Arg-172, and Gln-180 each coordinate substrate. Asp-209 lines the ATP pocket. A disordered region spans residues 240–271 (RSQKRTLPGQGDSGGLLLQGKRTHLESSSRPH). Residues 246–259 (LPGQGDSGGLLLQG) are compositionally biased toward low complexity. A compositionally biased stretch (basic and acidic residues) spans 262–271 (THLESSSRPH).

The protein belongs to the uridine kinase family.

The catalysed reaction is uridine + ATP = UMP + ADP + H(+). It carries out the reaction cytidine + ATP = CMP + ADP + H(+). It functions in the pathway pyrimidine metabolism; CTP biosynthesis via salvage pathway; CTP from cytidine: step 1/3. The protein operates within pyrimidine metabolism; UMP biosynthesis via salvage pathway; UMP from uridine: step 1/1. Phosphorylates uridine and cytidine to uridine monophosphate and cytidine monophosphate. Does not phosphorylate deoxyribonucleosides or purine ribonucleosides. Can use ATP or GTP as a phosphate donor. The chain is Uridine-cytidine kinase 1-B (uck1-b) from Xenopus laevis (African clawed frog).